Reading from the N-terminus, the 491-residue chain is Nucleoside transporter 1.1 (491 aa).

A run of 6 helical transmembrane segments spans residues 27 to 47, 82 to 102, 109 to 129, 136 to 156, 173 to 193, and 209 to 229; these read FYVY…VNAV, YNLI…LSWF, VRLL…MVVP, AGAV…KSIF, STMM…QIIV, and KIYY…LILL. Residues 260–273 are compositionally biased toward basic and acidic residues; that stretch reads CHTDEHPTHDKEGR. Disordered regions lie at residues 260 to 280 and 290 to 309; these read CHTD…SGKE and AAAK…PHEV. N-linked (GlcNAc...) asparagine glycosylation occurs at N274. Helical transmembrane passes span 333–353, 361–381, 395–415, 427–447, and 460–480; these read MFVA…GIAV, WFST…RFSP, WIIV…LLHS, VMEV…LVLG, and FVAG…GTVL.

The protein belongs to the SLC29A/ENT transporter (TC 2.A.57) family.

Its subcellular location is the membrane. It carries out the reaction adenosine(in) + H(+)(in) = adenosine(out) + H(+)(out). The catalysed reaction is uridine(in) + H(+)(in) = uridine(out) + H(+)(out). Functionally, sodium-independent high affinity nucleoside:H(+) symporter; transports adenosine and uridine. Can transport cytidine and thymidine. This is Nucleoside transporter 1.1 from Leishmania donovani.